Reading from the N-terminus, the 332-residue chain is Ribosomal RNA small subunit methyltransferase C (332 aa).

Belongs to the methyltransferase superfamily. RsmC family. Monomer.

The protein localises to the cytoplasm. It carries out the reaction guanosine(1207) in 16S rRNA + S-adenosyl-L-methionine = N(2)-methylguanosine(1207) in 16S rRNA + S-adenosyl-L-homocysteine + H(+). Its function is as follows. Specifically methylates the guanine in position 1207 of 16S rRNA in the 30S particle. The chain is Ribosomal RNA small subunit methyltransferase C from Pseudomonas paraeruginosa (strain DSM 24068 / PA7) (Pseudomonas aeruginosa (strain PA7)).